The chain runs to 610 residues: UvrABC system protein C (610 aa).

The 79-residue stretch at 16 to 94 (SQPGVYRMYD…IKLYQPRYNV (79 aa)) folds into the GIY-YIG domain. Residues 204–239 (DQVLNQLVARMEQASGDLRFEEAGRLRDQIQAVRRV) enclose the UVR domain.

The protein belongs to the UvrC family. As to quaternary structure, interacts with UvrB in an incision complex.

It is found in the cytoplasm. The UvrABC repair system catalyzes the recognition and processing of DNA lesions. UvrC both incises the 5' and 3' sides of the lesion. The N-terminal half is responsible for the 3' incision and the C-terminal half is responsible for the 5' incision. This Erwinia tasmaniensis (strain DSM 17950 / CFBP 7177 / CIP 109463 / NCPPB 4357 / Et1/99) protein is UvrABC system protein C.